The chain runs to 227 residues: Cytidylate kinase (227 aa).

12-20 (GPSGAGKGT) is a binding site for ATP.

The protein belongs to the cytidylate kinase family. Type 1 subfamily.

It is found in the cytoplasm. It carries out the reaction CMP + ATP = CDP + ADP. It catalyses the reaction dCMP + ATP = dCDP + ADP. The chain is Cytidylate kinase from Xanthomonas euvesicatoria pv. vesicatoria (strain 85-10) (Xanthomonas campestris pv. vesicatoria).